We begin with the raw amino-acid sequence, 272 residues long: Putative phosphoenolpyruvate synthase regulatory protein (272 aa).

Residue 152–159 coordinates ADP; that stretch reads GVSRCGKT.

It belongs to the pyruvate, phosphate/water dikinase regulatory protein family. PSRP subfamily.

The enzyme catalyses [pyruvate, water dikinase] + ADP = [pyruvate, water dikinase]-phosphate + AMP + H(+). It catalyses the reaction [pyruvate, water dikinase]-phosphate + phosphate + H(+) = [pyruvate, water dikinase] + diphosphate. In terms of biological role, bifunctional serine/threonine kinase and phosphorylase involved in the regulation of the phosphoenolpyruvate synthase (PEPS) by catalyzing its phosphorylation/dephosphorylation. This Pseudomonas fluorescens (strain Pf0-1) protein is Putative phosphoenolpyruvate synthase regulatory protein.